Reading from the N-terminus, the 160-residue chain is Transcriptional repressor NrdR (160 aa).

Residues 1–11 show a composition bias toward polar residues; that stretch reads MRCPNCNSLDT. The disordered stretch occupies residues 1–20; it reads MRCPNCNSLDTQVKDSRPTE. A zinc finger lies at 3–34; the sequence is CPNCNSLDTQVKDSRPTEDSSVIRRRRVCVAC. In terms of domain architecture, ATP-cone spans 49 to 139; it reads LTVIKRNGRR…VYRNFREAKD (91 aa).

Belongs to the NrdR family. The cofactor is Zn(2+).

In terms of biological role, negatively regulates transcription of bacterial ribonucleotide reductase nrd genes and operons by binding to NrdR-boxes. The sequence is that of Transcriptional repressor NrdR from Bradyrhizobium diazoefficiens (strain JCM 10833 / BCRC 13528 / IAM 13628 / NBRC 14792 / USDA 110).